We begin with the raw amino-acid sequence, 128 residues long: Fluoride-specific ion channel FluC (128 aa).

4 helical membrane-spanning segments follow: residues 8-28, 38-58, 71-91, and 103-123; these read IIFI…LGLL, LGTL…LAFF, FFVT…AEVI, and LMLA…GVFI. The Na(+) site is built by Gly-78 and Thr-81.

The protein belongs to the fluoride channel Fluc/FEX (TC 1.A.43) family.

Its subcellular location is the cell inner membrane. It catalyses the reaction fluoride(in) = fluoride(out). Na(+) is not transported, but it plays an essential structural role and its presence is essential for fluoride channel function. Its function is as follows. Fluoride-specific ion channel. Important for reducing fluoride concentration in the cell, thus reducing its toxicity. In Pasteurella multocida (strain Pm70), this protein is Fluoride-specific ion channel FluC.